We begin with the raw amino-acid sequence, 513 residues long: ATP synthase subunit alpha (513 aa).

169–176 (GDRQCGKT) contributes to the ATP binding site.

The protein belongs to the ATPase alpha/beta chains family. In terms of assembly, F-type ATPases have 2 components, CF(1) - the catalytic core - and CF(0) - the membrane proton channel. CF(1) has five subunits: alpha(3), beta(3), gamma(1), delta(1), epsilon(1). CF(0) has three main subunits: a(1), b(2) and c(9-12). The alpha and beta chains form an alternating ring which encloses part of the gamma chain. CF(1) is attached to CF(0) by a central stalk formed by the gamma and epsilon chains, while a peripheral stalk is formed by the delta and b chains.

The protein resides in the cell inner membrane. It carries out the reaction ATP + H2O + 4 H(+)(in) = ADP + phosphate + 5 H(+)(out). In terms of biological role, produces ATP from ADP in the presence of a proton gradient across the membrane. The alpha chain is a regulatory subunit. This chain is ATP synthase subunit alpha, found in Alteromonas mediterranea (strain DSM 17117 / CIP 110805 / LMG 28347 / Deep ecotype).